Consider the following 377-residue polypeptide: DNA replication and repair protein RecF (377 aa).

Residue 30–37 (GPNGQGKT) participates in ATP binding.

This sequence belongs to the RecF family.

The protein localises to the cytoplasm. The RecF protein is involved in DNA metabolism; it is required for DNA replication and normal SOS inducibility. RecF binds preferentially to single-stranded, linear DNA. It also seems to bind ATP. This is DNA replication and repair protein RecF from Thermobifida fusca (strain YX).